The following is a 115-amino-acid chain: MGETWFLTPNGQSSPGSWNARPSAGPAARMPTPRNRYFSRPSSTPLKVCTAPRAAPPPRASCAPRATPRRGWTMTPWSNATWPTRRAKTGSASAPAGPASSAPWPARSPERTPSP.

A disordered region spans residues 1-115; the sequence is MGETWFLTPN…ARSPERTPSP (115 aa). Residues 7–17 show a composition bias toward polar residues; sequence LTPNGQSSPGS. 2 stretches are compositionally biased toward low complexity: residues 60-70 and 91-107; these read ASCAPRATPRR and SASA…WPAR.

This is an uncharacterized protein from Human adenovirus C serotype 2 (HAdV-2).